We begin with the raw amino-acid sequence, 305 residues long: Superkiller complex protein 8 (305 aa).

N-acetylmethionine is present on methionine 1. The residue at position 2 (threonine 2) is an N-acetylthreonine; in WD repeat-containing protein 61, N-terminally processed. WD repeat units lie at residues 14-57 (AHDD…LELQ), 62-101 (GHQL…QMKS), 104-143 (AGPV…KEYS), 146-187 (TRGK…HTLE), 188-227 (GHAM…LAGT), 230-269 (GHAS…CIHT), and 272-305 (DHQD…DCPI).

It belongs to the SKI8 family. As to quaternary structure, component of the PAF1 complex, which consists of CDC73, PAF1, LEO1, CTR9, RTF1 and SKIC8. The PAF1 complex interacts with PHF5A. Within the PAF1 complex interacts directly with PHF5A. Component of the SKI complex which consists of SKIC2, SKIC3 and SKIC8.

The protein resides in the nucleus. It localises to the cytoplasm. Functionally, component of the PAF1 complex (PAF1C) which has multiple functions during transcription by RNA polymerase II and is implicated in regulation of development and maintenance of embryonic stem cell pluripotency. PAF1C associates with RNA polymerase II through interaction with POLR2A CTD non-phosphorylated and 'Ser-2'- and 'Ser-5'-phosphorylated forms and is involved in transcriptional elongation, acting both independently and synergistically with TCEA1 and in cooperation with the DSIF complex and HTATSF1. PAF1C is required for transcription of Hox and Wnt target genes. PAF1C is involved in hematopoiesis and stimulates transcriptional activity of KMT2A/MLL1; it promotes leukemogenesis through association with KMT2A/MLL1-rearranged oncoproteins, such as KMT2A/MLL1-MLLT3/AF9 and KMT2A/MLL1-MLLT1/ENL. PAF1C is involved in histone modifications such as ubiquitination of histone H2B and methylation on histone H3 'Lys-4' (H3K4me3). PAF1C recruits the RNF20/40 E3 ubiquitin-protein ligase complex and the E2 enzyme UBE2A or UBE2B to chromatin which mediate monoubiquitination of 'Lys-120' of histone H2B (H2BK120ub1); UB2A/B-mediated H2B ubiquitination is proposed to be coupled to transcription. PAF1C is involved in mRNA 3' end formation probably through association with cleavage and poly(A) factors. In case of infection by influenza A strain H3N2, PAF1C associates with viral NS1 protein, thereby regulating gene transcription. Required for mono- and trimethylation on histone H3 'Lys-4' (H3K4me3), dimethylation on histone H3 'Lys-79' (H3K4me3). Required for Hox gene transcription. Also acts as a component of the SKI complex, a multiprotein complex that assists the RNA-degrading exosome during the mRNA decay and quality-control pathways. The SKI complex catalyzes mRNA extraction from 80S ribosomal complexes in the 3'-5' direction and channels mRNA to the cytosolic exosome for degradation. SKI-mediated extraction of mRNA from stalled ribosomes allow binding of the Pelota-HBS1L complex and subsequent ribosome disassembly by ABCE1 for ribosome recycling. This is Superkiller complex protein 8 (Skic8) from Mus musculus (Mouse).